A 134-amino-acid chain; its full sequence is MRHYEIVFLVHPDQSEQVPAMVERYTNLITEDGGQVHRLEDWGRRQLAYPINKIHKAHYVLMNIECSDSVLSELNDTFRYNDAIIRNLVIRRKEAVTDVSPIKASEGREDRRSAPQREERNHDNSDEVSEESED.

The tract at residues 97–134 is disordered; the sequence is TDVSPIKASEGREDRRSAPQREERNHDNSDEVSEESED. Residues 105–125 are compositionally biased toward basic and acidic residues; that stretch reads SEGREDRRSAPQREERNHDNS.

This sequence belongs to the bacterial ribosomal protein bS6 family.

In terms of biological role, binds together with bS18 to 16S ribosomal RNA. In Marinomonas sp. (strain MWYL1), this protein is Small ribosomal subunit protein bS6.